Here is a 75-residue protein sequence, read N- to C-terminus: MKKDIHPKYTTVTVTCANCGNSFETRSTKESIKVDICSNCHPFYTGKQVLVDTAGRVERFKKRFAKKNASSSASE.

Belongs to the bacterial ribosomal protein bL31 family. Type A subfamily. In terms of assembly, part of the 50S ribosomal subunit.

In terms of biological role, binds the 23S rRNA. This is Large ribosomal subunit protein bL31 from Chlorobium phaeobacteroides (strain BS1).